A 374-amino-acid chain; its full sequence is GTPase Obg (374 aa).

The 159-residue stretch at 1–159 (MKFIDEVRIH…RDLRLELRLL (159 aa)) folds into the Obg domain. An OBG-type G domain is found at 160-333 (ADVGLLGLPN…LVYAIWQALP (174 aa)). GTP is bound by residues 166-173 (GLPNAGKS), 191-195 (FTTLY), 213-216 (DIPG), 283-286 (NKSD), and 314-316 (SAA). Mg(2+) is bound by residues Ser-173 and Thr-193. The segment at 337–374 (PAADPTQTEDWGDESDAGERLENWEGDDLDADWEEEQV) is disordered. The segment covering 360–374 (WEGDDLDADWEEEQV) has biased composition (acidic residues).

This sequence belongs to the TRAFAC class OBG-HflX-like GTPase superfamily. OBG GTPase family. Monomer. Mg(2+) is required as a cofactor.

The protein resides in the cytoplasm. Functionally, an essential GTPase which binds GTP, GDP and possibly (p)ppGpp with moderate affinity, with high nucleotide exchange rates and a fairly low GTP hydrolysis rate. Plays a role in control of the cell cycle, stress response, ribosome biogenesis and in those bacteria that undergo differentiation, in morphogenesis control. This chain is GTPase Obg, found in Acidithiobacillus ferrooxidans (strain ATCC 23270 / DSM 14882 / CIP 104768 / NCIMB 8455) (Ferrobacillus ferrooxidans (strain ATCC 23270)).